The sequence spans 280 residues: MRPVIKVGLSTASVYPLRAEAAFEYAAKLGYDGVELMVWGESVSQDIDAVKGLSRRYRVPVLSVHAPCLLISQRVWGANPVPKLERSVRAAEQLGAQTVVVHPPFRWQRRYAEGFSDQVAELEAASDVMIAVENMFPFRADRFFGADQSRERMRKRGGGPGPAISVFAPSFDPLAGNHAHYTLDLSHTATAGSDSLEMVRRMGSGLVHLHLCDGSGLPADEHLVPGRGTQPTAAVCQLLAGADFAGHVVLEVSTSSVRSATERETMLTESLQFARTYLLR.

The first 21 residues, Met1–Ala21, serve as a signal peptide directing secretion.

The protein to M.tuberculosis Rv0498 and S.coelicolor SCO3347.

This is an uncharacterized protein from Mycobacterium leprae (strain TN).